The primary structure comprises 126 residues: Large ribosomal subunit protein bL12 (126 aa).

This sequence belongs to the bacterial ribosomal protein bL12 family. As to quaternary structure, homodimer. Part of the ribosomal stalk of the 50S ribosomal subunit. Forms a multimeric L10(L12)X complex, where L10 forms an elongated spine to which 2 to 4 L12 dimers bind in a sequential fashion. Binds GTP-bound translation factors.

Its function is as follows. Forms part of the ribosomal stalk which helps the ribosome interact with GTP-bound translation factors. Is thus essential for accurate translation. The protein is Large ribosomal subunit protein bL12 of Teredinibacter turnerae (strain ATCC 39867 / T7901).